Consider the following 201-residue polypeptide: Small ribosomal subunit protein uS4c (201 aa).

The tract at residues 15-44 (LGALPGLTNKRPRAGSDLRNQSRSGKKSQY) is disordered. The 61-residue stretch at 89 to 149 (MRLDNILFRL…DEQNSRALIQ (61 aa)) folds into the S4 RNA-binding domain.

Belongs to the universal ribosomal protein uS4 family. In terms of assembly, part of the 30S ribosomal subunit. Contacts protein S5. The interaction surface between S4 and S5 is involved in control of translational fidelity.

The protein localises to the plastid. The protein resides in the chloroplast. Its function is as follows. One of the primary rRNA binding proteins, it binds directly to 16S rRNA where it nucleates assembly of the body of the 30S subunit. In terms of biological role, with S5 and S12 plays an important role in translational accuracy. The polypeptide is Small ribosomal subunit protein uS4c (rps4) (Daucus carota (Wild carrot)).